The sequence spans 183 residues: Capsid protein (183 aa).

A disordered region spans residues 136 to 183 (NAPILSTLPETTVVRRRGRSPRRRTPSPRRRRSQSPRRRRSQSRESQC). Positions 149-176 (VRRRGRSPRRRTPSPRRRRSQSPRRRRS) are enriched in basic residues. Phosphoserine; by host is present on residues Ser155, Ser162, and Ser170. The 1; half-length repeat unit spans residues 155-161 (SPRRRTP). Residues 155-177 (SPRRRTPSPRRRRSQSPRRRRSQ) are 3 X 8 AA repeats of S-P-R-R-R-[PR]-S-Q. The Bipartite nuclear localization signal signature appears at 158–175 (RRTPSPRRRRSQSPRRRR). 2 repeat units span residues 162–169 (SPRRRRSQ) and 170–177 (SPRRRRSQ). Residues 177–183 (QSRESQC) are RNA binding.

It belongs to the orthohepadnavirus core antigen family. As to quaternary structure, homodimerizes, then multimerizes. Interacts with cytosol exposed regions of viral L glycoprotein present in the reticulum-to-Golgi compartment. Interacts with human FLNB. Phosphorylated form interacts with host importin alpha; this interaction depends on the exposure of the NLS, which itself depends upon genome maturation and/or phosphorylation of the capsid protein. Interacts with host NUP153. Post-translationally, phosphorylated by host SRPK1, SRPK2, and maybe protein kinase C or GAPDH. Phosphorylation is critical for pregenomic RNA packaging. Protein kinase C phosphorylation is stimulated by HBx protein and may play a role in transport of the viral genome to the nucleus at the late step during the viral replication cycle.

Its subcellular location is the virion. It is found in the host cytoplasm. Its function is as follows. Self assembles to form an icosahedral capsid. Most capsids appear to be large particles with an icosahedral symmetry of T=4 and consist of 240 copies of capsid protein, though a fraction forms smaller T=3 particles consisting of 180 capsid proteins. Entering capsids are transported along microtubules to the nucleus. Phosphorylation of the capsid is thought to induce exposure of nuclear localization signal in the C-terminal portion of the capsid protein that allows binding to the nuclear pore complex via the importin (karyopherin-) alpha and beta. Capsids are imported in intact form through the nuclear pore into the nuclear basket, where it probably binds NUP153. Only capsids that contain the mature viral genome can release the viral DNA and capsid protein into the nucleoplasm. Immature capsids get stuck in the basket. Capsids encapsulate the pre-genomic RNA and the P protein. Pre-genomic RNA is reverse-transcribed into DNA while the capsid is still in the cytoplasm. The capsid can then either be directed to the nucleus, providing more genomes for transcription, or bud through the endoplasmic reticulum to provide new virions. This is Capsid protein from Homo sapiens (Human).